Here is a 180-residue protein sequence, read N- to C-terminus: Crossover junction endodeoxyribonuclease RuvC (180 aa).

Residues Asp7, Glu66, and Asp138 contribute to the active site. Residues Asp7, Glu66, and Asp138 each contribute to the Mg(2+) site.

Belongs to the RuvC family. Homodimer which binds Holliday junction (HJ) DNA. The HJ becomes 2-fold symmetrical on binding to RuvC with unstacked arms; it has a different conformation from HJ DNA in complex with RuvA. In the full resolvosome a probable DNA-RuvA(4)-RuvB(12)-RuvC(2) complex forms which resolves the HJ. Requires Mg(2+) as cofactor.

Its subcellular location is the cytoplasm. It catalyses the reaction Endonucleolytic cleavage at a junction such as a reciprocal single-stranded crossover between two homologous DNA duplexes (Holliday junction).. The RuvA-RuvB-RuvC complex processes Holliday junction (HJ) DNA during genetic recombination and DNA repair. Endonuclease that resolves HJ intermediates. Cleaves cruciform DNA by making single-stranded nicks across the HJ at symmetrical positions within the homologous arms, yielding a 5'-phosphate and a 3'-hydroxyl group; requires a central core of homology in the junction. The consensus cleavage sequence is 5'-(A/T)TT(C/G)-3'. Cleavage occurs on the 3'-side of the TT dinucleotide at the point of strand exchange. HJ branch migration catalyzed by RuvA-RuvB allows RuvC to scan DNA until it finds its consensus sequence, where it cleaves and resolves the cruciform DNA. The sequence is that of Crossover junction endodeoxyribonuclease RuvC from Burkholderia multivorans (strain ATCC 17616 / 249).